A 401-amino-acid chain; its full sequence is Splicing factor 45 (401 aa).

S2 is subject to N-acetylserine. At S2 the chain carries Phosphoserine. K15 participates in a covalent cross-link: Glycyl lysine isopeptide (Lys-Gly) (interchain with G-Cter in SUMO2). Residue K21 is modified to N6-acetyllysine. Glycyl lysine isopeptide (Lys-Gly) (interchain with G-Cter in SUMO2) cross-links involve residues K24 and K33. N6-acetyllysine; alternate is present on K41. Residue K41 forms a Glycyl lysine isopeptide (Lys-Gly) (interchain with G-Cter in SUMO2); alternate linkage. The span at 57–68 (LKRGGSSDDRQI) shows a compositional bias: basic and acidic residues. Disordered regions lie at residues 57–84 (LKRG…DPVP) and 114–233 (RQRE…FLAN). K58 is covalently cross-linked (Glycyl lysine isopeptide (Lys-Gly) (interchain with G-Cter in SUMO2)). At T71 the chain carries Phosphothreonine. Residues 114 to 153 (RQREERQRQRELERQKEIEEREKRRKDRHEASGFARRPDP) show a composition bias toward basic and acidic residues. Phosphoserine is present on residues S155 and S169. Positions 182-200 (VEKDKELPRDFPYEEDSRP) are enriched in basic and acidic residues. S222 bears the Phosphoserine mark. One can recognise a G-patch domain in the interval 235 to 283 (GGTVAHKIMQKYGFREGQGLGKHEQGLSTALSVEKTSKRGGKIIVGDAT). The residue at position 237 (T237) is a Phosphothreonine. Residue K256 forms a Glycyl lysine isopeptide (Lys-Gly) (interchain with G-Cter in SUMO2) linkage. S266 carries the post-translational modification Phosphoserine. Residue K276 forms a Glycyl lysine isopeptide (Lys-Gly) (interchain with G-Cter in SUMO2) linkage. A phosphoserine mark is found at S291 and S293. In terms of domain architecture, RRM spans 306–385 (VVLLRNMVGA…YFGGRVVKAC (80 aa)).

As to quaternary structure, binds SXL. Associates with the spliceosome. Interacts with SF3B1, SF1 and U2AF2.

It localises to the nucleus. In terms of biological role, splice factor that binds to the single-stranded 3'AG at the exon/intron border and promotes its utilization in the second catalytic step. Involved in the regulation of alternative splicing and the utilization of cryptic splice sites. Promotes the utilization of a cryptic splice site created by the beta-110 mutation in the HBB gene. The resulting frameshift leads to sickle cell anemia. The chain is Splicing factor 45 (RBM17) from Homo sapiens (Human).